The chain runs to 319 residues: NADH-ubiquinone oxidoreductase chain 1 (319 aa).

A run of 8 helical transmembrane segments spans residues 3–23 (LITL…AMAF), 74–94 (LFLL…IPLP), 106–126 (ILFI…SGWA), 149–169 (TLGL…LTTF), 175–195 (AVWL…STLA), 226–246 (LFFL…TILF), 254–274 (LTIN…FLWV), and 294–314 (FLPL…SMAG).

Belongs to the complex I subunit 1 family.

It localises to the mitochondrion inner membrane. It catalyses the reaction a ubiquinone + NADH + 5 H(+)(in) = a ubiquinol + NAD(+) + 4 H(+)(out). Its function is as follows. Core subunit of the mitochondrial membrane respiratory chain NADH dehydrogenase (Complex I) that is believed to belong to the minimal assembly required for catalysis. Complex I functions in the transfer of electrons from NADH to the respiratory chain. The immediate electron acceptor for the enzyme is believed to be ubiquinone. The polypeptide is NADH-ubiquinone oxidoreductase chain 1 (MT-ND1) (Polypterus ornatipinnis (Ornate bichir)).